Here is a 390-residue protein sequence, read N- to C-terminus: Protein snail (390 aa).

An SNAG domain region spans residues 1–20 (MAANYKSCPLKKRPIVFVEE). 2 disordered regions span residues 29–65 (ALTKDSQFAQDQPQDLSLKRGRDEETQDYQQPEPKRD) and 162–191 (QSVYSYQQMTPPSSPGSDLETGSEPEDLSV). Polar residues-rich tracts occupy residues 32–43 (KDSQFAQDQPQD) and 162–172 (QSVYSYQQMTP). 5 consecutive C2H2-type zinc fingers follow at residues 245–267 (FKCDECQKMYSTSMGLSKHRQFH), 280–302 (HSCEECGKLYTTIGALKMHIRTH), 306–328 (CKCPICGKAFSRPWLLQGHIRTH), 334–356 (FQCPDCPRSFADRSNLRAHQQTH), and 362–385 (YACQVCHKSFSRMSLLNKHSSSNC).

It belongs to the snail C2H2-type zinc-finger protein family.

The protein resides in the nucleus. Its function is as follows. Essential for the correct specification of ventral-dorsal patterns. This is Protein snail (sna) from Drosophila melanogaster (Fruit fly).